A 495-amino-acid chain; its full sequence is Phosphomethylpyrimidine synthase (495 aa).

Substrate-binding positions include asparagine 125, methionine 154, tyrosine 183, histidine 219, 239 to 241 (SRG), 280 to 283 (DGLR), and glutamate 319. Position 323 (histidine 323) interacts with Zn(2+). A substrate-binding site is contributed by tyrosine 346. Histidine 387 contributes to the Zn(2+) binding site. 3 residues coordinate [4Fe-4S] cluster: cysteine 467, cysteine 470, and cysteine 475.

The protein belongs to the ThiC family. The cofactor is [4Fe-4S] cluster.

It carries out the reaction 5-amino-1-(5-phospho-beta-D-ribosyl)imidazole + S-adenosyl-L-methionine = 4-amino-2-methyl-5-(phosphooxymethyl)pyrimidine + CO + 5'-deoxyadenosine + formate + L-methionine + 3 H(+). It functions in the pathway cofactor biosynthesis; thiamine diphosphate biosynthesis. Catalyzes the synthesis of the hydroxymethylpyrimidine phosphate (HMP-P) moiety of thiamine from aminoimidazole ribotide (AIR) in a radical S-adenosyl-L-methionine (SAM)-dependent reaction. This is Phosphomethylpyrimidine synthase from Leptospira interrogans serogroup Icterohaemorrhagiae serovar copenhageni (strain Fiocruz L1-130).